The primary structure comprises 329 residues: Sideroflexin (329 aa).

A run of 5 helical transmembrane segments spans residues 95–115 (AFLP…ASIG), 147–167 (ILEA…GLGW), 183–203 (LRMM…VLIM), 238–258 (FSRA…MGLF), and 274–294 (LNLA…IALF).

It belongs to the sideroflexin family.

It is found in the mitochondrion membrane. Functionally, mitochondrial amino-acid transporter that mediates transport of serine into mitochondria. This Dictyostelium discoideum (Social amoeba) protein is Sideroflexin.